A 265-amino-acid polypeptide reads, in one-letter code: Small ribosomal subunit protein uS2 (265 aa).

The tract at residues 231-265 (VEEEYEDYEGSEEDYDYDETEYADSVIPEDGEEAE) is disordered.

It belongs to the universal ribosomal protein uS2 family.

This is Small ribosomal subunit protein uS2 from Nostoc sp. (strain PCC 7120 / SAG 25.82 / UTEX 2576).